We begin with the raw amino-acid sequence, 232 residues long: MAKISKRRQAFAAKVDRQKLYAIEDALALVKECASAKFDESIDVAVQLGIDAKKSDQVVRGSVVLPAGTGKSVRVAVFAQGEKAEQARAAGAEIVGMEDLAEQIKAGQMDFDIVIASPDTMRIVGTLGQILGPRGLMPNPKVGTVTPDVATAVKNAKAGQVQFRVDKAGIIHATIGRASFEAAALRSNLSALIEALQKAKPATSKGVYLRKVALSSTMGVGLRVDQATLAAQ.

The protein belongs to the universal ribosomal protein uL1 family. In terms of assembly, part of the 50S ribosomal subunit.

Its function is as follows. Binds directly to 23S rRNA. The L1 stalk is quite mobile in the ribosome, and is involved in E site tRNA release. In terms of biological role, protein L1 is also a translational repressor protein, it controls the translation of the L11 operon by binding to its mRNA. This is Large ribosomal subunit protein uL1 from Burkholderia ambifaria (strain MC40-6).